A 308-amino-acid polypeptide reads, in one-letter code: tRNA pseudouridine synthase B (308 aa).

Aspartate 47 functions as the Nucleophile in the catalytic mechanism.

This sequence belongs to the pseudouridine synthase TruB family. Type 1 subfamily.

The catalysed reaction is uridine(55) in tRNA = pseudouridine(55) in tRNA. Its function is as follows. Responsible for synthesis of pseudouridine from uracil-55 in the psi GC loop of transfer RNAs. The sequence is that of tRNA pseudouridine synthase B from Xanthomonas campestris pv. campestris (strain 8004).